The following is an 878-amino-acid chain: Alanine--tRNA ligase (878 aa).

Residues His-571, His-575, Cys-673, and His-677 each contribute to the Zn(2+) site.

It belongs to the class-II aminoacyl-tRNA synthetase family. It depends on Zn(2+) as a cofactor.

Its subcellular location is the cytoplasm. The enzyme catalyses tRNA(Ala) + L-alanine + ATP = L-alanyl-tRNA(Ala) + AMP + diphosphate. Functionally, catalyzes the attachment of alanine to tRNA(Ala) in a two-step reaction: alanine is first activated by ATP to form Ala-AMP and then transferred to the acceptor end of tRNA(Ala). Also edits incorrectly charged Ser-tRNA(Ala) and Gly-tRNA(Ala) via its editing domain. The protein is Alanine--tRNA ligase of Syntrophus aciditrophicus (strain SB).